Consider the following 114-residue polypeptide: UPF0342 protein LCA_0622 (114 aa).

This sequence belongs to the UPF0342 family.

The chain is UPF0342 protein LCA_0622 from Latilactobacillus sakei subsp. sakei (strain 23K) (Lactobacillus sakei subsp. sakei).